Here is a 147-residue protein sequence, read N- to C-terminus: uncharacterized protein (147 aa).

The region spanning 44–147 (LVGYIDKEIH…LKSIKERLSI (104 aa)) is the HTH LytTR-type domain.

It localises to the cytoplasm. This is an uncharacterized protein from Staphylococcus aureus (strain MW2).